The chain runs to 171 residues: Inosine/xanthosine triphosphatase (171 aa).

Residue 8-13 (TTNPAK) participates in substrate binding. The Mg(2+) site is built by Glu-38 and Gln-68.

This sequence belongs to the YjjX NTPase family. In terms of assembly, homodimer. Mg(2+) is required as a cofactor. Requires Mn(2+) as cofactor.

The enzyme catalyses XTP + H2O = XDP + phosphate + H(+). It catalyses the reaction ITP + H2O = IDP + phosphate + H(+). Functionally, phosphatase that hydrolyzes non-canonical purine nucleotides such as XTP and ITP to their respective diphosphate derivatives. Probably excludes non-canonical purines from DNA/RNA precursor pool, thus preventing their incorporation into DNA/RNA and avoiding chromosomal lesions. The polypeptide is Inosine/xanthosine triphosphatase (Citrobacter koseri (strain ATCC BAA-895 / CDC 4225-83 / SGSC4696)).